The chain runs to 326 residues: 2-dehydropantoate 2-reductase (326 aa).

Residues 7–12 (GAGAIG) and Asn-103 each bind NADP(+). Residue Asn-103 participates in substrate binding. Lys-205 acts as the Proton donor in catalysis. Asn-209, Asn-213, and Ser-274 together coordinate substrate. Glu-286 is a binding site for NADP(+).

It belongs to the ketopantoate reductase family.

Its subcellular location is the cytoplasm. The catalysed reaction is (R)-pantoate + NADP(+) = 2-dehydropantoate + NADPH + H(+). It participates in cofactor biosynthesis; (R)-pantothenate biosynthesis; (R)-pantoate from 3-methyl-2-oxobutanoate: step 2/2. Its function is as follows. Catalyzes the NADPH-dependent reduction of ketopantoate into pantoic acid. The sequence is that of 2-dehydropantoate 2-reductase from Mesorhizobium japonicum (strain LMG 29417 / CECT 9101 / MAFF 303099) (Mesorhizobium loti (strain MAFF 303099)).